A 226-amino-acid polypeptide reads, in one-letter code: Cytidylate kinase (226 aa).

An ATP-binding site is contributed by 12–20 (GPSGAGKGT).

The protein belongs to the cytidylate kinase family. Type 1 subfamily.

Its subcellular location is the cytoplasm. It catalyses the reaction CMP + ATP = CDP + ADP. It carries out the reaction dCMP + ATP = dCDP + ADP. In Xanthomonas campestris pv. campestris (strain B100), this protein is Cytidylate kinase.